A 267-amino-acid polypeptide reads, in one-letter code: Short chain dehydrogenase claC (267 aa).

NADP(+) is bound by residues Ile27, Asp73, Asn100, and Arg133. Catalysis depends on proton donor residues Ser149 and Ser150. NADP(+) contacts are provided by Tyr164, Lys168, and Thr199. Catalysis depends on Tyr164, which acts as the Proton acceptor. The Lowers pKa of active site Tyr role is filled by Lys168.

The protein belongs to the short-chain dehydrogenases/reductases (SDR) family.

It functions in the pathway pigment biosynthesis. In terms of biological role, non-reducing polyketide synthase; part of the gene cluster that mediates the biosynthesis of the bianthraquinone cladofulvin, a conidial pigment not required for virulence but that plays a role in fitness and resistance to environmental stresses including UV light and low-temperature stress. The pathway begins with the synthesis of atrochrysone thioester by the polyketide synthase (PKS) claG. The atrochrysone carboxyl ACP thioesterase claF then breaks the thioester bond and releases the atrochrysone carboxylic acid from claG. This compound is decarboxylated by claH to yield emodin, which is further converted to chrysophanol hydroquinone by the reductase claC and the dehydratase claB. The cytochrome monooxygenase P450 claM then catalyzes the dimerization of nataloe-emodin to cladofulvin. The polypeptide is Short chain dehydrogenase claC (Passalora fulva (Tomato leaf mold)).